The chain runs to 158 residues: UPF0262 protein Rsph17025_0594 (158 aa).

It belongs to the UPF0262 family.

The protein is UPF0262 protein Rsph17025_0594 of Cereibacter sphaeroides (strain ATCC 17025 / ATH 2.4.3) (Rhodobacter sphaeroides).